A 901-amino-acid chain; its full sequence is Protein translocase subunit SecA (901 aa).

ATP is bound by residues Gln-87, Gly-105–Thr-109, and Asp-512. 4 residues coordinate Zn(2+): Cys-885, Cys-887, Cys-896, and His-897.

It belongs to the SecA family. Monomer and homodimer. Part of the essential Sec protein translocation apparatus which comprises SecA, SecYEG and auxiliary proteins SecDF-YajC and YidC. Requires Zn(2+) as cofactor.

Its subcellular location is the cell inner membrane. The protein resides in the cytoplasm. It carries out the reaction ATP + H2O + cellular proteinSide 1 = ADP + phosphate + cellular proteinSide 2.. Functionally, part of the Sec protein translocase complex. Interacts with the SecYEG preprotein conducting channel. Has a central role in coupling the hydrolysis of ATP to the transfer of proteins into and across the cell membrane, serving both as a receptor for the preprotein-SecB complex and as an ATP-driven molecular motor driving the stepwise translocation of polypeptide chains across the membrane. In Salmonella arizonae (strain ATCC BAA-731 / CDC346-86 / RSK2980), this protein is Protein translocase subunit SecA.